Reading from the N-terminus, the 139-residue chain is Large ribosomal subunit protein bL17 (139 aa).

Belongs to the bacterial ribosomal protein bL17 family. As to quaternary structure, part of the 50S ribosomal subunit. Contacts protein L32.

This is Large ribosomal subunit protein bL17 from Myxococcus xanthus (strain DK1622).